The sequence spans 441 residues: Protein eva-1 homolog C (441 aa).

The tract at residues 1-23 (MLLPGPARQPPTPQPVQHPGLRR) is disordered. Positions 1 to 48 (MLLPGPARQPPTPQPVQHPGLRRQVEPPGQLLRLFYCTVLVCSKEISA) are cleaved as a signal peptide. The segment covering 7 to 16 (ARQPPTPQPV) has biased composition (pro residues). At 49 to 322 (LTDFSGYLTK…AYIRAHPERA (274 aa)) the chain is on the extracellular side. N62 carries N-linked (GlcNAc...) asparagine glycosylation. Positions 67 to 159 (ACDGDYLNLQ…KYLLVSFKCQ (93 aa)) constitute an SUEL-type lectin 1 domain. N165 carries N-linked (GlcNAc...) asparagine glycosylation. The SUEL-type lectin 2 domain maps to 168-260 (VCEDQELKLH…KYLTVTYACV (93 aa)). Residues 323–343 (ALLFVSSVCIGLALTLCALVI) form a helical membrane-spanning segment. Residues 344–441 (RESCAKDFRD…SLPRNMGQFY (98 aa)) are Cytoplasmic-facing. The interval 362–391 (VPGSDKVEEDSEDEEEEEDSSESDFPGELS) is disordered. The span at 368–383 (VEEDSEDEEEEEDSSE) shows a compositional bias: acidic residues.

It belongs to the EVA1 family.

Its subcellular location is the cell membrane. Binds heparin. The polypeptide is Protein eva-1 homolog C (EVA1C) (Pan troglodytes (Chimpanzee)).